Here is a 585-residue protein sequence, read N- to C-terminus: A-type ATP synthase subunit A (585 aa).

Residue 231–238 (GPFGSGKT) participates in ATP binding.

Belongs to the ATPase alpha/beta chains family. As to quaternary structure, has multiple subunits with at least A(3), B(3), C, D, E, F, H, I and proteolipid K(x).

Its subcellular location is the cell membrane. It catalyses the reaction ATP + H2O + 4 H(+)(in) = ADP + phosphate + 5 H(+)(out). Functionally, component of the A-type ATP synthase that produces ATP from ADP in the presence of a proton gradient across the membrane. The A chain is the catalytic subunit. The chain is A-type ATP synthase subunit A from Desulfurococcus sp. (strain SY).